A 142-amino-acid polypeptide reads, in one-letter code: Large ribosomal subunit protein uL13 (142 aa).

This sequence belongs to the universal ribosomal protein uL13 family. In terms of assembly, part of the 50S ribosomal subunit.

Functionally, this protein is one of the early assembly proteins of the 50S ribosomal subunit, although it is not seen to bind rRNA by itself. It is important during the early stages of 50S assembly. This chain is Large ribosomal subunit protein uL13, found in Pelobacter propionicus (strain DSM 2379 / NBRC 103807 / OttBd1).